A 558-amino-acid chain; its full sequence is Membrane protein insertase YidC (558 aa).

5 helical membrane passes run 3–23 (IKRT…FDNW), 364–384 (FVGN…AVFF), 438–458 (LPVV…LASV), 477–497 (PYFI…KLNP), and 508–528 (MMFM…GLVL).

It belongs to the OXA1/ALB3/YidC family. Type 1 subfamily. In terms of assembly, interacts with the Sec translocase complex via SecD. Specifically interacts with transmembrane segments of nascent integral membrane proteins during membrane integration.

The protein localises to the cell inner membrane. Required for the insertion and/or proper folding and/or complex formation of integral membrane proteins into the membrane. Involved in integration of membrane proteins that insert both dependently and independently of the Sec translocase complex, as well as at least some lipoproteins. Aids folding of multispanning membrane proteins. This is Membrane protein insertase YidC from Burkholderia mallei (strain NCTC 10247).